The following is a 423-amino-acid chain: AP-1 complex subunit mu-1 (423 aa).

Residue serine 2 is modified to N-acetylserine. Phosphothreonine is present on residues threonine 152, threonine 154, and threonine 223. Positions 168-421 (KNEVFLDVIE…ITQNGDYQLR (254 aa)) constitute an MHD domain.

The protein belongs to the adaptor complexes medium subunit family. Adaptor protein complex 1 (AP-1) is a heterotetramer composed of two large adaptins (gamma-type subunit AP1G1 and beta-type subunit AP1B1), a medium adaptin (mu-type subunit AP1M1 or AP1M2) and a small adaptin (sigma-type subunit AP1S1 or AP1S2 or AP1S3). Interacts with MARCHF11. Phosphorylation of membrane-bound AP1M1/AP1M2 increases its affinity for sorting signals.

The protein localises to the cytoplasmic vesicle. It is found in the clathrin-coated vesicle membrane. Its subcellular location is the golgi apparatus. Subunit of clathrin-associated adaptor protein complex 1 that plays a role in protein sorting in the trans-Golgi network (TGN) and endosomes. The AP complexes mediate the recruitment of clathrin to membranes and the recognition of sorting signals within the cytosolic tails of transmembrane cargo molecules. This is AP-1 complex subunit mu-1 from Bos taurus (Bovine).